The following is a 302-amino-acid chain: Sulfate adenylyltransferase subunit 2 (302 aa).

Belongs to the PAPS reductase family. CysD subfamily. In terms of assembly, heterodimer composed of CysD, the smaller subunit, and CysN.

It catalyses the reaction sulfate + ATP + H(+) = adenosine 5'-phosphosulfate + diphosphate. Its pathway is sulfur metabolism; hydrogen sulfide biosynthesis; sulfite from sulfate: step 1/3. Its function is as follows. With CysN forms the ATP sulfurylase (ATPS) that catalyzes the adenylation of sulfate producing adenosine 5'-phosphosulfate (APS) and diphosphate, the first enzymatic step in sulfur assimilation pathway. APS synthesis involves the formation of a high-energy phosphoric-sulfuric acid anhydride bond driven by GTP hydrolysis by CysN coupled to ATP hydrolysis by CysD. In Proteus mirabilis (strain HI4320), this protein is Sulfate adenylyltransferase subunit 2.